The sequence spans 97 residues: Large ribosomal subunit protein eL21 (97 aa).

Belongs to the eukaryotic ribosomal protein eL21 family.

In Methanococcus vannielii (strain ATCC 35089 / DSM 1224 / JCM 13029 / OCM 148 / SB), this protein is Large ribosomal subunit protein eL21.